We begin with the raw amino-acid sequence, 430 residues long: Probable protein phosphatase 1N (430 aa).

Residues 16 to 65 (CKKKEREKEGREEEEEEEAGRRAPEGPRSLLTAPRRAQRPHGGAEASGGL) form a disordered region. Positions 17 to 26 (KKKEREKEGR) are enriched in basic and acidic residues. The 261-residue stretch at 66 to 326 (RFGASAAQGW…DNMTCILVCF (261 aa)) folds into the PPM-type phosphatase domain. Asp-103, Gly-104, Asp-274, and Asp-317 together coordinate Mn(2+). Residues 407 to 430 (GEKGQDGAGKSNPTHLGSALDMEA) are disordered.

Belongs to the PP2C family. Mg(2+) is required as a cofactor. Requires Mn(2+) as cofactor.

It catalyses the reaction O-phospho-L-seryl-[protein] + H2O = L-seryl-[protein] + phosphate. It carries out the reaction O-phospho-L-threonyl-[protein] + H2O = L-threonyl-[protein] + phosphate. The chain is Probable protein phosphatase 1N (PPM1N) from Homo sapiens (Human).